Consider the following 519-residue polypeptide: Ribonuclease Y (519 aa).

A helical transmembrane segment spans residues 3-23 (LLSLLLILLGIILGVVVGYIV). The KH domain maps to 209 to 269 (TVSVVNLPND…IRREIARTAL (61 aa)). Positions 335–428 (VLKHSIEVAH…VAAADALSAA (94 aa)) constitute an HD domain.

Belongs to the RNase Y family.

Its subcellular location is the cell membrane. Its function is as follows. Endoribonuclease that initiates mRNA decay. This chain is Ribonuclease Y, found in Staphylococcus epidermidis (strain ATCC 35984 / DSM 28319 / BCRC 17069 / CCUG 31568 / BM 3577 / RP62A).